Reading from the N-terminus, the 62-residue chain is Large ribosomal subunit protein eL24 (62 aa).

4 residues coordinate Zn(2+): Cys-6, Cys-9, Cys-32, and Cys-36. The C4-type zinc finger occupies 6–36 (CSFCEGTIEPGCGKKYVKKDGSVMHFCSSKC).

This sequence belongs to the eukaryotic ribosomal protein eL24 family. Part of the 50S ribosomal subunit. Forms a cluster with proteins L3 and L14. Zn(2+) is required as a cofactor.

In terms of biological role, binds to the 23S rRNA. This chain is Large ribosomal subunit protein eL24, found in Methanococcus maripaludis (strain C7 / ATCC BAA-1331).